A 54-amino-acid chain; its full sequence is uncharacterized protein (54 aa).

This is an uncharacterized protein from Escherichia coli (strain K12).